Consider the following 990-residue polypeptide: Protein argonaute 7 (990 aa).

Basic residues predominate over residues 1–13 (MEEKTHHHHHSTN). Positions 1–25 (MEEKTHHHHHSTNKHIPSSKSRTPL) are disordered. One can recognise a PAZ domain in the interval 379 to 484 (EFLTDLPRNK…LPMELCMICE (106 aa)). In terms of domain architecture, Piwi spans 649-950 (LIICVMEKKH…AAYRGRLYIE (302 aa)). The tract at residues 953–973 (SESNGGSMNPSSVSRVGPPKT) is disordered. The span at 954–966 (ESNGGSMNPSSVS) shows a compositional bias: polar residues.

This sequence belongs to the argonaute family. Ago subfamily. In terms of tissue distribution, expressed in leaves and floral buds, and at low levels in roots.

Its function is as follows. Involved in RNA-mediated post-transcriptional gene silencing (PTGS). Main component of the RNA-induced silencing complex (RISC) that binds to a short guide RNA such as a microRNA (miRNA) or small interfering RNA (siRNA). RISC uses the mature miRNA or siRNA as a guide for slicer-directed cleavage of homologous mRNAs to repress gene expression. Required for the processing of 21 nucleotide trans-acting siRNAs (ta-siRNAs) derived from TAS3a transcripts. Associates preferentially with the microRNA (miRNA) miR390 which guides the cleavage of TAS3 precursor RNA. Seems to act as miR390 specific slicer. Associates mainly with small RNAs of 21 nucleotide in length and with a 5' terminal adenosine. Acts in the RDR6/SGS3/DCL4/AGO7 trans-acting siRNA pathway involved in leaf developmental timing. Does not seem to act on leaf polarity. Required for the production of the 30-40nt bacterial-induced long siRNAs (lsiRNA). Involved in antiviral RNA silencing by contributing to efficient viral RNAs clearance. Targets less structured viral RNAs than AGO1 which is capable of targeting RNAs with more compact structures. The chain is Protein argonaute 7 (AGO7) from Arabidopsis thaliana (Mouse-ear cress).